A 288-amino-acid chain; its full sequence is Adenylate kinase (288 aa).

Gly65–Thr70 lines the ATP pocket. An NMP region spans residues Ala85–Val114. AMP is bound by residues Thr86, Arg91, Lys112–Val114, Gly142–Arg145, and Gln149. The interval Gly178–Asp226 is LID. An ATP-binding site is contributed by Arg179. AMP is bound by residues Arg223 and Arg234. Gly262 is an ATP binding site.

It belongs to the adenylate kinase family. As to quaternary structure, monomer.

It is found in the cytoplasm. The catalysed reaction is AMP + ATP = 2 ADP. Functionally, catalyzes the reversible transfer of the terminal phosphate group between ATP and AMP. Plays an important role in cellular energy homeostasis and in adenine nucleotide metabolism. The polypeptide is Adenylate kinase (ADK) (Solanum tuberosum (Potato)).